A 261-amino-acid polypeptide reads, in one-letter code: Phosphatidylglycerol--prolipoprotein diacylglyceryl transferase (261 aa).

The next 7 membrane-spanning stretches (helical) occupy residues 19 to 39 (VHWYGLMYLVGFAMAWGLALY), 56 to 76 (LIFYGALGLIIGGRLGYMLFY), 92 to 112 (WRGGMSFHGGLIGVIVTTWIF), 126 to 146 (FVVPLVPLGLAAGRIGNFING), 173 to 193 (QLYEFLLEGALLFIVIWWFSA), 199 to 219 (FAVSSLFLLCYGLFRFTAEFF), and 227 to 247 (GFVAFGWLTRGQELSLPMIII). A 1,2-diacyl-sn-glycero-3-phospho-(1'-sn-glycerol) is bound at residue R139.

This sequence belongs to the Lgt family.

It is found in the cell inner membrane. It carries out the reaction L-cysteinyl-[prolipoprotein] + a 1,2-diacyl-sn-glycero-3-phospho-(1'-sn-glycerol) = an S-1,2-diacyl-sn-glyceryl-L-cysteinyl-[prolipoprotein] + sn-glycerol 1-phosphate + H(+). Its pathway is protein modification; lipoprotein biosynthesis (diacylglyceryl transfer). Functionally, catalyzes the transfer of the diacylglyceryl group from phosphatidylglycerol to the sulfhydryl group of the N-terminal cysteine of a prolipoprotein, the first step in the formation of mature lipoproteins. The protein is Phosphatidylglycerol--prolipoprotein diacylglyceryl transferase of Coxiella burnetii (strain Dugway 5J108-111).